Consider the following 359-residue polypeptide: tRNA N6-adenosine threonylcarbamoyltransferase (359 aa).

His-115 and His-119 together coordinate Fe cation. Substrate contacts are provided by residues 137-141 (LVSGG), Asp-170, Gly-183, and Asn-283. Asp-311 is a binding site for Fe cation. A disordered region spans residues 328 to 359 (APDSLDLAPRSRWPLDEKSAPLIGTGRRGAKA).

The protein belongs to the KAE1 / TsaD family. Requires Fe(2+) as cofactor.

It is found in the cytoplasm. It carries out the reaction L-threonylcarbamoyladenylate + adenosine(37) in tRNA = N(6)-L-threonylcarbamoyladenosine(37) in tRNA + AMP + H(+). Its function is as follows. Required for the formation of a threonylcarbamoyl group on adenosine at position 37 (t(6)A37) in tRNAs that read codons beginning with adenine. Is involved in the transfer of the threonylcarbamoyl moiety of threonylcarbamoyl-AMP (TC-AMP) to the N6 group of A37, together with TsaE and TsaB. TsaD likely plays a direct catalytic role in this reaction. The protein is tRNA N6-adenosine threonylcarbamoyltransferase of Brucella anthropi (strain ATCC 49188 / DSM 6882 / CCUG 24695 / JCM 21032 / LMG 3331 / NBRC 15819 / NCTC 12168 / Alc 37) (Ochrobactrum anthropi).